The following is a 74-amino-acid chain: ATP synthase subunit c (74 aa).

Transmembrane regions (helical) follow at residues 5 to 25 (LAHI…IGVG) and 49 to 69 (LFIG…VALL).

It belongs to the ATPase C chain family. F-type ATPases have 2 components, F(1) - the catalytic core - and F(0) - the membrane proton channel. F(1) has five subunits: alpha(3), beta(3), gamma(1), delta(1), epsilon(1). F(0) has three main subunits: a(1), b(2) and c(10-14). The alpha and beta chains form an alternating ring which encloses part of the gamma chain. F(1) is attached to F(0) by a central stalk formed by the gamma and epsilon chains, while a peripheral stalk is formed by the delta and b chains.

It localises to the cell inner membrane. F(1)F(0) ATP synthase produces ATP from ADP in the presence of a proton or sodium gradient. F-type ATPases consist of two structural domains, F(1) containing the extramembraneous catalytic core and F(0) containing the membrane proton channel, linked together by a central stalk and a peripheral stalk. During catalysis, ATP synthesis in the catalytic domain of F(1) is coupled via a rotary mechanism of the central stalk subunits to proton translocation. Its function is as follows. Key component of the F(0) channel; it plays a direct role in translocation across the membrane. A homomeric c-ring of between 10-14 subunits forms the central stalk rotor element with the F(1) delta and epsilon subunits. This is ATP synthase subunit c from Ruegeria pomeroyi (strain ATCC 700808 / DSM 15171 / DSS-3) (Silicibacter pomeroyi).